The sequence spans 179 residues: Large ribosomal subunit protein uL6 (179 aa).

Belongs to the universal ribosomal protein uL6 family. Part of the 50S ribosomal subunit.

Its function is as follows. This protein binds to the 23S rRNA, and is important in its secondary structure. It is located near the subunit interface in the base of the L7/L12 stalk, and near the tRNA binding site of the peptidyltransferase center. This is Large ribosomal subunit protein uL6 from Rippkaea orientalis (strain PCC 8801 / RF-1) (Cyanothece sp. (strain PCC 8801)).